The sequence spans 198 residues: Glycerol-3-phosphate acyltransferase (198 aa).

The next 5 membrane-spanning stretches (helical) occupy residues 1–21, 77–97, 111–131, 136–156, and 157–177; these read MTIIIIVLSYFLGSIPTGFLF, HLFEVLAGISAVSGHIWPIWL, MFIALSWKVGFASLGIFLIIL, IVSLSSILAAFFLPLFMFLDI, and GVTNHPYFLISLVVSILVILK.

This sequence belongs to the PlsY family. Probably interacts with PlsX.

The protein resides in the cell inner membrane. The catalysed reaction is an acyl phosphate + sn-glycerol 3-phosphate = a 1-acyl-sn-glycero-3-phosphate + phosphate. The protein operates within lipid metabolism; phospholipid metabolism. Functionally, catalyzes the transfer of an acyl group from acyl-phosphate (acyl-PO(4)) to glycerol-3-phosphate (G3P) to form lysophosphatidic acid (LPA). This enzyme utilizes acyl-phosphate as fatty acyl donor, but not acyl-CoA or acyl-ACP. This is Glycerol-3-phosphate acyltransferase from Prochlorococcus marinus (strain MIT 9515).